The following is a 449-amino-acid chain: Clusterin (449 aa).

Residues 1 to 21 form the signal peptide; that stretch reads MKTLLLLVGLLLTLENGQVLG. The Nuclear localization signal signature appears at 77-80; the sequence is KKKK. N-linked (GlcNAc...) asparagine glycans are attached at residues asparagine 85 and asparagine 102. Cystine bridges form between cysteine 101–cysteine 313, cysteine 112–cysteine 305, cysteine 115–cysteine 302, cysteine 120–cysteine 295, and cysteine 128–cysteine 285. Residue serine 132 is modified to Phosphoserine. N-linked (GlcNAc...) asparagine glycosylation is found at asparagine 144, asparagine 291, asparagine 328, asparagine 354, and asparagine 374. Phosphoserine is present on serine 396. Positions 443–447 match the Nuclear localization signal motif; it reads RQKNR.

This sequence belongs to the clusterin family. As to quaternary structure, antiparallel disulfide-linked heterodimer of an alpha chain and a beta chain. Self-associates and forms higher oligomers. Interacts with a broad range of misfolded proteins, including APP, APOC2 and LYZ. Slightly acidic pH promotes interaction with misfolded proteins. Forms high-molecular weight oligomers upon interaction with misfolded proteins. Interacts with APOA1, LRP2, CLUAP1 and PON1. Interacts with the complement membrane attack complex. Interacts (via alpha chain) with XRCC6. Interacts with SYVN1, COMMD1, BTRC, CUL1 and with ubiquitin and SCF (SKP1-CUL1-F-box protein) E3 ubiquitin-protein ligase complexes. Interacts (via alpha chain) with BAX in stressed cells, where BAX undergoes a conformation change leading to association with the mitochondrial membrane. Does not interact with BAX in unstressed cells. Found in a complex with LTF, CLU, EPPIN and SEMG1. Interacts (immaturely glycosylated pre-secreted form) with HSPA5; this interaction promotes CLU stability and facilitates stress-induced CLU retrotranslocation from the secretory pathway to the mitochondria, thereby reducing stress-induced apoptosis by stabilizing mitochondrial membrane integrity. Interacts with BCL2L1; this interaction releases and activates BAX and promotes cell death. Interacts with TGFBR2 and ACVR1. Interacts (secreted form) with STMN3; this interaction may act as an important modulator during neuronal differentiation. Interacts with VLDLR and LRP8. In terms of processing, proteolytically cleaved on its way through the secretory system, probably within the Golgi lumen. Proteolytic cleavage is not necessary for its chaperone activity. All non-secreted forms are not proteolytically cleaved. Chaperone activity of uncleaved forms is dependent on a non-reducing environment. Post-translationally, polyubiquitinated, leading to proteasomal degradation. Under cellular stress, the intracellular level of cleaved form is reduced due to proteasomal degradation. Heavily N-glycosylated. About 30% of the protein mass is comprised of complex N-linked carbohydrate. Endoplasmic reticulum (ER) stress induces changes in glycosylation status and increases level of hypoglycosylated forms. Core carbohydrates are essential for chaperone activity. Non-secreted forms are hypoglycosylated or unglycosylated.

It is found in the secreted. It localises to the nucleus. The protein resides in the cytoplasm. Its subcellular location is the mitochondrion membrane. The protein localises to the cytosol. It is found in the microsome. It localises to the endoplasmic reticulum. The protein resides in the mitochondrion. Its subcellular location is the perinuclear region. The protein localises to the cytoplasmic vesicle. It is found in the secretory vesicle. It localises to the chromaffin granule. Its function is as follows. Functions as extracellular chaperone that prevents aggregation of non native proteins. Prevents stress-induced aggregation of blood plasma proteins. Inhibits formation of amyloid fibrils by APP, APOC2, B2M, CALCA, CSN3, SNCA and aggregation-prone LYZ variants (in vitro). Does not require ATP. Maintains partially unfolded proteins in a state appropriate for subsequent refolding by other chaperones, such as HSPA8/HSC70. Does not refold proteins by itself. Binding to cell surface receptors triggers internalization of the chaperone-client complex and subsequent lysosomal or proteasomal degradation. When secreted, protects cells against apoptosis and against cytolysis by complement: inhibits assembly of the complement membrane attack complex (MAC) by preventing polymerization of C9 pore component of the MAC complex. Intracellular forms interact with ubiquitin and SCF (SKP1-CUL1-F-box protein) E3 ubiquitin-protein ligase complexes and promote the ubiquitination and subsequent proteasomal degradation of target proteins. Promotes proteasomal degradation of COMMD1 and IKBKB. Modulates NF-kappa-B transcriptional activity. Following stress, promotes apoptosis. Inhibits apoptosis when associated with the mitochondrial membrane by interference with BAX-dependent release of cytochrome c into the cytoplasm. Plays a role in the regulation of cell proliferation. An intracellular form suppresses stress-induced apoptosis by stabilizing mitochondrial membrane integrity through interaction with HSPA5. Secreted form does not affect caspase or BAX-mediated intrinsic apoptosis and TNF-induced NF-kappa-B-activity. Secreted form act as an important modulator during neuronal differentiation through interaction with STMN3. Plays a role in the clearance of immune complexes that arise during cell injury. This chain is Clusterin (CLU), found in Equus caballus (Horse).